Consider the following 103-residue polypeptide: Small ribosomal subunit protein uS14c (103 aa).

A disordered region spans residues 27–56 (SKKKIRSKVSPLSLSEKTKMQEKLQSLPRN).

This sequence belongs to the universal ribosomal protein uS14 family. Part of the 30S ribosomal subunit.

The protein localises to the plastid. It localises to the chloroplast. In terms of biological role, binds 16S rRNA, required for the assembly of 30S particles. This Zea mays (Maize) protein is Small ribosomal subunit protein uS14c.